The chain runs to 106 residues: uncharacterized protein (106 aa).

The next 2 membrane-spanning stretches (helical) occupy residues 25–45 and 62–82; these read VMNV…IHYI and ICFL…NFQG.

The protein resides in the membrane. This is an uncharacterized protein from Saccharomyces cerevisiae (strain ATCC 204508 / S288c) (Baker's yeast).